Reading from the N-terminus, the 117-residue chain is SGSCQFKTCWHVTPEFRLVSSVLKEKFQRATFINSHNKNTGVFHPRRLKKKRLAKELVYFEKSPDFCERDTKVDSPGTQGRVCNKTSHQMDSCGNLCCGRGHNILMQTPSERCNCRF.

Residue Ser-1 is the site of O-palmitoleoyl serine; by PORCN attachment. A disulfide bond links Cys-83 and Cys-98. An N-linked (GlcNAc...) asparagine glycan is attached at Asn-84.

The protein belongs to the Wnt family. Post-translationally, palmitoleoylation is required for efficient binding to frizzled receptors. Depalmitoleoylation leads to Wnt signaling pathway inhibition.

It localises to the secreted. The protein localises to the extracellular space. The protein resides in the extracellular matrix. Its function is as follows. Member of the Wnt ligand gene family that encodes for secreted proteins, which activate the Wnt signaling cascade. Involved in neurogenesis. Performs a partially redundant function with wnt1 in the formation of the midbrain-hindbrain boundary (MHB) organizer. This is Protein Wnt-10b (WNT-10B) from Plethodon jordani (Red-cheeked salamander).